A 363-amino-acid chain; its full sequence is Glutamate 5-kinase (363 aa).

Lysine 3 is an ATP binding site. Positions 43, 128, and 140 each coordinate substrate. Residues 160-161 and 202-208 contribute to the ATP site; these read TD and TGGMRTK. The region spanning 267–349 is the PUA domain; that stretch reads AGAILIDDGA…REIENVLGYS (83 aa).

Belongs to the glutamate 5-kinase family.

Its subcellular location is the cytoplasm. It carries out the reaction L-glutamate + ATP = L-glutamyl 5-phosphate + ADP. Its pathway is amino-acid biosynthesis; L-proline biosynthesis; L-glutamate 5-semialdehyde from L-glutamate: step 1/2. Catalyzes the transfer of a phosphate group to glutamate to form L-glutamate 5-phosphate. This is Glutamate 5-kinase from Xanthomonas axonopodis pv. citri (strain 306).